A 430-amino-acid chain; its full sequence is Serine--tRNA ligase (430 aa).

Residue 237–239 (TAE) participates in L-serine binding. Residue 268 to 270 (RSE) coordinates ATP. Glutamate 291 contacts L-serine. An ATP-binding site is contributed by 355 to 358 (EISS). Serine 391 serves as a coordination point for L-serine.

The protein belongs to the class-II aminoacyl-tRNA synthetase family. Type-1 seryl-tRNA synthetase subfamily. Homodimer. The tRNA molecule binds across the dimer.

It localises to the cytoplasm. It carries out the reaction tRNA(Ser) + L-serine + ATP = L-seryl-tRNA(Ser) + AMP + diphosphate + H(+). The catalysed reaction is tRNA(Sec) + L-serine + ATP = L-seryl-tRNA(Sec) + AMP + diphosphate + H(+). The protein operates within aminoacyl-tRNA biosynthesis; selenocysteinyl-tRNA(Sec) biosynthesis; L-seryl-tRNA(Sec) from L-serine and tRNA(Sec): step 1/1. In terms of biological role, catalyzes the attachment of serine to tRNA(Ser). Is also able to aminoacylate tRNA(Sec) with serine, to form the misacylated tRNA L-seryl-tRNA(Sec), which will be further converted into selenocysteinyl-tRNA(Sec). The sequence is that of Serine--tRNA ligase from Shigella dysenteriae serotype 1 (strain Sd197).